An 88-amino-acid polypeptide reads, in one-letter code: Small ribosomal subunit protein uS15 (88 aa).

This sequence belongs to the universal ribosomal protein uS15 family. In terms of assembly, part of the 30S ribosomal subunit. Forms a bridge to the 50S subunit in the 70S ribosome, contacting the 23S rRNA.

One of the primary rRNA binding proteins, it binds directly to 16S rRNA where it helps nucleate assembly of the platform of the 30S subunit by binding and bridging several RNA helices of the 16S rRNA. Functionally, forms an intersubunit bridge (bridge B4) with the 23S rRNA of the 50S subunit in the ribosome. This is Small ribosomal subunit protein uS15 from Thermoanaerobacter pseudethanolicus (strain ATCC 33223 / 39E) (Clostridium thermohydrosulfuricum).